We begin with the raw amino-acid sequence, 203 residues long: CS5 fimbrial subunit (203 aa).

The N-terminal stretch at 1–22 (MKKNLLITSVLAMATVSGSVLA) is a signal peptide.

The protein resides in the fimbrium. In terms of biological role, major subunit of fimbriae. Fimbriae (also called pili), are polar filaments radiating from the surface of the bacterium to a length of 0.5-1.5 micrometers and numbering 100-300 per cell. They enable bacteria to colonize the epithelium of specific host organs. The chain is CS5 fimbrial subunit from Escherichia coli.